The sequence spans 419 residues: Testin (419 aa).

Residues Met92 to Asn199 form the PET domain. 2 disordered regions span residues Glu133–Cys164 and Asn199–Asp222. The segment covering Pro155 to Cys164 has biased composition (basic and acidic residues). LIM zinc-binding domains lie at Tyr232–Glu295, Pro297–Val357, and Gln360–Ser419.

It belongs to the prickle / espinas / testin family. In terms of assembly, interacts via LIM domain 1 with ZYX. Interacts (via LIM domain 3) with ENAH and VASP. Interacts with ALKBH4, talin, actin, alpha-actinin, GRIP1 and PXN. Interacts (via LIM domain 2) with ACTL7A (via N-terminus). Heterodimer with ACTL7A; the heterodimer interacts with ENAH to form a heterotrimer.

It is found in the cytoplasm. The protein resides in the cell junction. It localises to the focal adhesion. Its function is as follows. Scaffold protein that may play a role in cell adhesion, cell spreading and in the reorganization of the actin cytoskeleton. Plays a role in the regulation of cell proliferation. May act as a tumor suppressor. This chain is Testin (Tes), found in Rattus norvegicus (Rat).